The sequence spans 478 residues: Calcium/calmodulin-dependent protein kinase type II subunit alpha (478 aa).

Tyrosine 13 carries the phosphotyrosine modification. Residues 13-271 enclose the Protein kinase domain; the sequence is YQLFEELGKG…AAEALKHPWI (259 aa). ATP-binding positions include 19–27 and lysine 42; that span reads LGKGAFSVV. Aspartate 135 (proton acceptor) is an active-site residue. At serine 257 the chain carries Phosphoserine. Threonine 286 bears the Phosphothreonine; by autocatalysis mark. Residues 290–300 are calmodulin-binding; the sequence is LKKFNARRKLK. The interval 310-320 is interaction with BAALC; that stretch reads TRNFSGGKSGG. The tract at residues 314-341 is disordered; sequence SGGKSGGNKKNDGVKESSESTNTTIEDE. Positions 322–331 are enriched in basic and acidic residues; the sequence is KKNDGVKESS. Phosphoserine is present on residues serine 330, serine 331, and serine 333. Phosphothreonine is present on residues threonine 336 and threonine 337. Position 404 is a phosphoserine (serine 404).

The protein belongs to the protein kinase superfamily. CAMK Ser/Thr protein kinase family. CaMK subfamily. In terms of assembly, there are 4 genes encoding calcium/calmodulin-dependent protein kinase type II chains: CAMK2A, CAMK2B, CAMK2G and CAMK2D. The corresponding proteins assemble into homo- or heteromultimeric holoenzymes composed of 12 subunits with two hexameric rings stacked one on top of the other. Interacts with BAALC. Interacts with MPDZ. Interacts with SYN1. Interacts with CAMK2N2. Interacts with SYNGAP1. Interacts with SYNPO2. Interacts with SHANK3. Interacts with GRIN2B. Interacts with CACNB2. Interacts with LRRC7. Interacts with GRM5. Interacts with DAGLA (via C-terminal); this interaction is enhanced by autophosphorylation of CAMK2A at Thr-286. Interacts with CAMK2N1; this interaction requires CAMK2A activation by Ca(2+). The cofactor is Mg(2+). In terms of processing, autophosphorylation of Thr-286 following activation by Ca(2+)/calmodulin. Phosphorylation of Thr-286 locks the kinase into an activated state. Palmitoylated. Probably palmitoylated by ZDHHC3 and ZDHHC7. As to expression, expressed in brain. In terms of tissue distribution, expressed in skeletal muscle.

Its subcellular location is the cytoplasm. The protein resides in the synapse. It localises to the postsynaptic density. The protein localises to the cell projection. It is found in the dendritic spine. Its subcellular location is the dendrite. It carries out the reaction L-seryl-[protein] + ATP = O-phospho-L-seryl-[protein] + ADP + H(+). It catalyses the reaction L-threonyl-[protein] + ATP = O-phospho-L-threonyl-[protein] + ADP + H(+). With respect to regulation, activated by Ca(2+)/calmodulin. Binding of calmodulin results in conformational change that relieves intrasteric autoinhibition and allows autophosphorylation of Thr-286 which turns the kinase in a constitutively active form and confers to the kinase a Ca(2+)-independent activity. Calcium/calmodulin-dependent protein kinase that functions autonomously after Ca(2+)/calmodulin-binding and autophosphorylation, and is involved in various processes, such as synaptic plasticity, neurotransmitter release and long-term potentiation. Member of the NMDAR signaling complex in excitatory synapses, it regulates NMDAR-dependent potentiation of the AMPAR and therefore excitatory synaptic transmission. Regulates dendritic spine development. Also regulates the migration of developing neurons. Phosphorylates the transcription factor FOXO3 to activate its transcriptional activity. Phosphorylates the transcription factor ETS1 in response to calcium signaling, thereby decreasing ETS1 affinity for DNA. In response to interferon-gamma (IFN-gamma) stimulation, catalyzes phosphorylation of STAT1, stimulating the JAK-STAT signaling pathway. In response to interferon-beta (IFN-beta) stimulation, stimulates the JAK-STAT signaling pathway. Acts as a negative regulator of 2-arachidonoylglycerol (2-AG)-mediated synaptic signaling via modulation of DAGLA activity. Its function is as follows. Has no kinase activity. This is Calcium/calmodulin-dependent protein kinase type II subunit alpha (Camk2a) from Mus musculus (Mouse).